The primary structure comprises 614 residues: Dihydroxy-acid dehydratase (614 aa).

Asp-81 contacts Mg(2+). Residue Cys-122 participates in [2Fe-2S] cluster binding. Residues Asp-123 and Lys-124 each contribute to the Mg(2+) site. At Lys-124 the chain carries N6-carboxylysine. Cys-193 provides a ligand contact to [2Fe-2S] cluster. Glu-489 provides a ligand contact to Mg(2+). The Proton acceptor role is filled by Ser-515.

The protein belongs to the IlvD/Edd family. As to quaternary structure, homodimer. The cofactor is [2Fe-2S] cluster. Mg(2+) serves as cofactor.

It carries out the reaction (2R)-2,3-dihydroxy-3-methylbutanoate = 3-methyl-2-oxobutanoate + H2O. It catalyses the reaction (2R,3R)-2,3-dihydroxy-3-methylpentanoate = (S)-3-methyl-2-oxopentanoate + H2O. Its pathway is amino-acid biosynthesis; L-isoleucine biosynthesis; L-isoleucine from 2-oxobutanoate: step 3/4. The protein operates within amino-acid biosynthesis; L-valine biosynthesis; L-valine from pyruvate: step 3/4. In terms of biological role, functions in the biosynthesis of branched-chain amino acids. Catalyzes the dehydration of (2R,3R)-2,3-dihydroxy-3-methylpentanoate (2,3-dihydroxy-3-methylvalerate) into 2-oxo-3-methylpentanoate (2-oxo-3-methylvalerate) and of (2R)-2,3-dihydroxy-3-methylbutanoate (2,3-dihydroxyisovalerate) into 2-oxo-3-methylbutanoate (2-oxoisovalerate), the penultimate precursor to L-isoleucine and L-valine, respectively. The chain is Dihydroxy-acid dehydratase from Marinomonas sp. (strain MWYL1).